The primary structure comprises 167 residues: Ureidoglycolate lyase (167 aa).

It belongs to the ureidoglycolate lyase family. As to quaternary structure, homodimer. The cofactor is Ni(2+).

It catalyses the reaction (S)-ureidoglycolate = urea + glyoxylate. The protein operates within nitrogen metabolism; (S)-allantoin degradation. Catalyzes the catabolism of the allantoin degradation intermediate (S)-ureidoglycolate, generating urea and glyoxylate. Involved in the utilization of allantoin as nitrogen source. The chain is Ureidoglycolate lyase from Pseudomonas fluorescens (strain ATCC BAA-477 / NRRL B-23932 / Pf-5).